We begin with the raw amino-acid sequence, 485 residues long: Subtilisin-like protease 1 (485 aa).

The signal sequence occupies residues 1-19 (MGIFRFISISLAAVSAANA). Residues 20–116 (GHILSMGHAK…VEPDTTITIH (97 aa)) constitute a propeptide that is removed on maturation. The Inhibitor I9 domain occupies 34 to 116 (SYIVVMKDGT…VEPDTTITIH (83 aa)). One can recognise a Peptidase S8 domain in the interval 126–400 (SWGLARISSQ…NILINNGDAK (275 aa)). Residues Asp158 and His190 each act as charge relay system in the active site. N-linked (GlcNAc...) asparagine glycosylation is present at Asn251. Catalysis depends on Ser345, which acts as the Charge relay system. The span at 377-394 (GTSSVTNPGPGTRTNILI) shows a compositional bias: polar residues. The tract at residues 377–462 (GTSSVTNPGP…HTPFPNDDFN (86 aa)) is disordered. The segment covering 409-418 (PSQPPKPSQP) has biased composition (pro residues). Over residues 419–428 (SKPQQPSEPQ) the composition is skewed to low complexity. Over residues 433-455 (PQEPAPGQPAPAPAPVPQHPHTP) the composition is skewed to pro residues.

The protein belongs to the peptidase S8 family.

It is found in the secreted. Its function is as follows. Secreted subtilisin-like serine protease with keratinolytic activity that contributes to pathogenicity. This chain is Subtilisin-like protease 1 (SUB1), found in Arthroderma otae (strain ATCC MYA-4605 / CBS 113480) (Microsporum canis).